Reading from the N-terminus, the 427-residue chain is MAAKWEKLEGNVGVLTIEVDAKEVNKSLDAAFKKVVKTINVPGFRKGKMPRPLFEQRFGVESLYQDALDIILPKAYSEAIDETGIFPVAHPEIDIEKFEKNENLVFTAKVTVKPEVKLGEYKGLAVEKIDTTVTDEDVENELKALQERQAELVVKEDGTVENGDTAVIDFEGFVNGEAFEGGKGENYSLAIGSGTFIPGFEEQLIGLKAGESKDVEVTFPEEYHAEELAGKPATFKVTVHEIKAKELPELNDEFAKDVNEEVATLDELKAKLRTDLEEGKKHEAEHKVRDEVVEKAAANAEIDIPEAMIETELDRMVREFEQRLSQQGMNLELYYQFTGTDADKLKEQMKEDAQKRVRINLVLEAIIKAENIEVAEEEVNAEIEKMAEMYNMPVDAIKQALGSAEALAEDLKVRKAVDFLVDNSKAA.

Residues 163–248 (GDTAVIDFEG…VHEIKAKELP (86 aa)) enclose the PPIase FKBP-type domain.

The protein belongs to the FKBP-type PPIase family. Tig subfamily.

The protein localises to the cytoplasm. The enzyme catalyses [protein]-peptidylproline (omega=180) = [protein]-peptidylproline (omega=0). Functionally, involved in protein export. Acts as a chaperone by maintaining the newly synthesized protein in an open conformation. Functions as a peptidyl-prolyl cis-trans isomerase. The polypeptide is Trigger factor (Bacillus cytotoxicus (strain DSM 22905 / CIP 110041 / 391-98 / NVH 391-98)).